Reading from the N-terminus, the 189-residue chain is Xanthine phosphoribosyltransferase (189 aa).

Xanthine-binding residues include leucine 20 and asparagine 27. Position 128-132 (128-132) interacts with 5-phospho-alpha-D-ribose 1-diphosphate; sequence ANGEA. Residue lysine 156 participates in xanthine binding.

It belongs to the purine/pyrimidine phosphoribosyltransferase family. Xpt subfamily. In terms of assembly, homodimer.

The protein resides in the cytoplasm. The catalysed reaction is XMP + diphosphate = xanthine + 5-phospho-alpha-D-ribose 1-diphosphate. It participates in purine metabolism; XMP biosynthesis via salvage pathway; XMP from xanthine: step 1/1. Functionally, converts the preformed base xanthine, a product of nucleic acid breakdown, to xanthosine 5'-monophosphate (XMP), so it can be reused for RNA or DNA synthesis. The chain is Xanthine phosphoribosyltransferase from Clostridium acetobutylicum (strain ATCC 824 / DSM 792 / JCM 1419 / IAM 19013 / LMG 5710 / NBRC 13948 / NRRL B-527 / VKM B-1787 / 2291 / W).